A 324-amino-acid polypeptide reads, in one-letter code: tRNA N6-adenosine threonylcarbamoyltransferase (324 aa).

Histidine 107, histidine 111, and tyrosine 127 together coordinate Fe cation. Residues 127–131 (YVSGG), aspartate 159, glycine 172, glutamate 176, and asparagine 257 each bind substrate. Aspartate 285 contacts Fe cation.

This sequence belongs to the KAE1 / TsaD family. In terms of assembly, monomer. Component of the KEOPS complex that consists of Kae1, Bud32, Cgi121 and Pcc1; the whole complex dimerizes. The cofactor is Fe(2+).

It localises to the cytoplasm. It catalyses the reaction L-threonylcarbamoyladenylate + adenosine(37) in tRNA = N(6)-L-threonylcarbamoyladenosine(37) in tRNA + AMP + H(+). Functionally, required for the formation of a threonylcarbamoyl group on adenosine at position 37 (t(6)A37) in tRNAs that read codons beginning with adenine. Is a component of the KEOPS complex that is probably involved in the transfer of the threonylcarbamoyl moiety of threonylcarbamoyl-AMP (TC-AMP) to the N6 group of A37. Kae1 likely plays a direct catalytic role in this reaction, but requires other protein(s) of the complex to fulfill this activity. This is tRNA N6-adenosine threonylcarbamoyltransferase from Pyrococcus horikoshii (strain ATCC 700860 / DSM 12428 / JCM 9974 / NBRC 100139 / OT-3).